The primary structure comprises 235 residues: MTSESATVIQMDDGRAPAPAAAGAAAAAAASSSYATAPTSISAAEPAAAPRKTTTVPFLLRSGAEGFRRCLAVIDFLLRVAAFGPTLAAAISTGTADERLSVFTNFFQFHARFDDFPAFTFFLVANAVAAGYLVLSLPFSVVVILRPNKATGGVRLLLLLCDVLIMALLTAAGAAAAAIVYVAHSGNRRANWVPICMQFHGFCQRTSGSVVATFLAVLVFIVLILMAACVIRRSK.

Residues 1 to 70 (MTSESATVIQ…RSGAEGFRRC (70 aa)) lie on the Cytoplasmic side of the membrane. The helical transmembrane segment at 71–91 (LAVIDFLLRVAAFGPTLAAAI) threads the bilayer. At 92 to 118 (STGTADERLSVFTNFFQFHARFDDFPA) the chain is on the extracellular side. The chain crosses the membrane as a helical span at residues 119-139 (FTFFLVANAVAAGYLVLSLPF). Over 140–162 (SVVVILRPNKATGGVRLLLLLCD) the chain is Cytoplasmic. The helical transmembrane segment at 163 to 183 (VLIMALLTAAGAAAAAIVYVA) threads the bilayer. The Extracellular segment spans residues 184-210 (HSGNRRANWVPICMQFHGFCQRTSGSV). The chain crosses the membrane as a helical span at residues 211-231 (VATFLAVLVFIVLILMAACVI). Topologically, residues 232 to 235 (RRSK) are cytoplasmic.

Belongs to the Casparian strip membrane proteins (CASP) family. In terms of assembly, homodimer and heterodimers.

The protein localises to the cell membrane. In terms of biological role, regulates membrane-cell wall junctions and localized cell wall deposition. Required for establishment of the Casparian strip membrane domain (CSD) and the subsequent formation of Casparian strips, a cell wall modification of the root endodermis that determines an apoplastic barrier between the intraorganismal apoplasm and the extraorganismal apoplasm and prevents lateral diffusion. The polypeptide is Casparian strip membrane protein 2 (Sorghum bicolor (Sorghum)).